Here is a 267-residue protein sequence, read N- to C-terminus: Ribosomal RNA small subunit methyltransferase A (267 aa).

The S-adenosyl-L-methionine site is built by Asn-16, Leu-18, Gly-43, Glu-64, Asp-88, and Asn-109.

Belongs to the class I-like SAM-binding methyltransferase superfamily. rRNA adenine N(6)-methyltransferase family. RsmA subfamily.

Its subcellular location is the cytoplasm. The enzyme catalyses adenosine(1518)/adenosine(1519) in 16S rRNA + 4 S-adenosyl-L-methionine = N(6)-dimethyladenosine(1518)/N(6)-dimethyladenosine(1519) in 16S rRNA + 4 S-adenosyl-L-homocysteine + 4 H(+). Its function is as follows. Specifically dimethylates two adjacent adenosines (A1518 and A1519) in the loop of a conserved hairpin near the 3'-end of 16S rRNA in the 30S particle. May play a critical role in biogenesis of 30S subunits. This Acidithiobacillus ferrooxidans (strain ATCC 23270 / DSM 14882 / CIP 104768 / NCIMB 8455) (Ferrobacillus ferrooxidans (strain ATCC 23270)) protein is Ribosomal RNA small subunit methyltransferase A.